Reading from the N-terminus, the 79-residue chain is MARIGVENSLTDVQQALKQQGHEVVTLNSEQDAQGCDCCVVTGQDSNMMGIADASIKGSVITAHGLTTDDICQQVESRT.

Belongs to the UPF0180 family.

The sequence is that of UPF0180 protein BCAH820_1484 from Bacillus cereus (strain AH820).